A 131-amino-acid polypeptide reads, in one-letter code: Small ribosomal subunit protein uS9 (131 aa).

It belongs to the universal ribosomal protein uS9 family.

This Mannheimia succiniciproducens (strain KCTC 0769BP / MBEL55E) protein is Small ribosomal subunit protein uS9.